We begin with the raw amino-acid sequence, 583 residues long: MDINDDSNDDHLASYDIQLCIQESIEASQAIFHPKRLVQLSDQNRKLVEAIRQGRIFELQEYVQYKYALEEADEKGWFPLHEAVVQPIQQILETVLDASYKTLWEFKTCDGETPLTLAVKAGLVENVKTLLDKGVWPNTKNDKGETPLLIAIKRGSYDMVSALIKYNTSLDQPCVKRWSAMHEAAKQGRKDIITLLLNHRGNVHLRDGFGVTPLGVAAEYGHCDVLEHLIHKGGDVFALADDGASVLFEAAGGGNPDCISLLLKYGGSGNVPNRAGHLPIHRAAYEGHYLALKYLIPVTSKHAIQKSGLTPIHSAAEGQNAQCLELLIENGFDVNALLADHISQSYDDERKTALYFAVSNNDIHCTEVLLAAGADPNLDPLNCLLVAVRANRHEIVRLLLSYGANVNCYFMHVNDTRFPSAIQYALNDEIMLRLLLNNGYQVELCFDCMHGNIFGNSFVWSETEEEGLPGWTSCIIKDNPFCEFITVPWMKHLVGGIVRILIDYMDYVPLCAKLKSVLEVQREWPEIRQIIENPCSLKHLCRLKIRRVMGLQRLCQPASIQMLPLPAAMRRYLLFKEFDLYGQ.

ANK repeat units follow at residues 75 to 104, 110 to 139, 143 to 172, 176 to 205, 209 to 238, 242 to 271, 275 to 304, 307 to 336, 349 to 378, 379 to 408, and 416 to 444; these read KGWF…KTLW, DGET…WPNT, KGET…SLDQ, KRWS…NVHL, FGVT…DVFA, DGAS…SGNV, AGHL…KHAI, SGLT…DVNA, ERKT…DPNL, DPLN…NVNC, and TRFP…QVEL. The SOCS box domain occupies 524 to 579; that stretch reads WPEIRQIIENPCSLKHLCRLKIRRVMGLQRLCQPASIQMLPLPAAMRRYLLFKEFD.

Belongs to the ankyrin SOCS box (ASB) family.

It functions in the pathway protein modification; protein ubiquitination. May be a substrate-recognition component of a SCF-like ECS (Elongin-Cullin-SOCS-box protein) E3 ubiquitin-protein ligase complex which mediates the ubiquitination and subsequent proteasomal degradation of target proteins. The chain is Ankyrin repeat and SOCS box protein 15 (Asb15) from Mus musculus (Mouse).